Reading from the N-terminus, the 327-residue chain is Tryptophan--tRNA ligase (327 aa).

ATP contacts are provided by residues 9-11 (QPS) and 17-18 (GN). The 'HIGH' region signature appears at 10–18 (PSGTLTLGN). D132 contributes to the L-tryptophan binding site. Residues 144–146 (GDD), I183, and 192–196 (KMSKS) each bind ATP. The 'KMSKS' region motif lies at 192–196 (KMSKS).

It belongs to the class-I aminoacyl-tRNA synthetase family. As to quaternary structure, homodimer.

The protein localises to the cytoplasm. The catalysed reaction is tRNA(Trp) + L-tryptophan + ATP = L-tryptophyl-tRNA(Trp) + AMP + diphosphate + H(+). Its function is as follows. Catalyzes the attachment of tryptophan to tRNA(Trp). This is Tryptophan--tRNA ligase from Oceanobacillus iheyensis (strain DSM 14371 / CIP 107618 / JCM 11309 / KCTC 3954 / HTE831).